The primary structure comprises 102 residues: Monothiol glutaredoxin-S10 (102 aa).

Residues 1 to 101 form the Glutaredoxin domain; the sequence is MDVVARLASQ…ILLKEAGALW (101 aa). Cysteine 21 serves as a coordination point for [2Fe-2S] cluster. A Responsive for interaction with TGA factors motif is present at residues 99–102; that stretch reads ALWL.

This sequence belongs to the glutaredoxin family. CC-type subfamily.

The protein resides in the cytoplasm. It is found in the nucleus. Functionally, may only reduce GSH-thiol disulfides, but not protein disulfides. The polypeptide is Monothiol glutaredoxin-S10 (GRXS10) (Arabidopsis thaliana (Mouse-ear cress)).